The following is a 110-amino-acid chain: U1-lycotoxin-Ls1kk (110 aa).

The first 20 residues, Met-1 to Ala-20, serve as a signal peptide directing secretion. The propeptide occupies Glu-21 to Arg-44. 4 disulfide bridges follow: Cys-47/Cys-62, Cys-54/Cys-71, Cys-61/Cys-89, and Cys-73/Cys-87.

The protein belongs to the neurotoxin 19 (CSTX) family. 03 subfamily. As to expression, expressed by the venom gland.

Its subcellular location is the secreted. In Lycosa singoriensis (Wolf spider), this protein is U1-lycotoxin-Ls1kk.